A 161-amino-acid chain; its full sequence is Nucleotide-binding protein Rfer_2692 (161 aa).

This sequence belongs to the YajQ family.

Functionally, nucleotide-binding protein. This chain is Nucleotide-binding protein Rfer_2692, found in Albidiferax ferrireducens (strain ATCC BAA-621 / DSM 15236 / T118) (Rhodoferax ferrireducens).